The chain runs to 350 residues: Serpentine receptor class beta-12 (350 aa).

At 1 to 21 (MSEANLTECELAYQLTYHPFY) the chain is on the extracellular side. A glycan (N-linked (GlcNAc...) asparagine) is linked at Asn-5. Residues 22–42 (MIAQFWSFFVSLLAMPSLIFF) form a helical membrane-spanning segment. At 43–57 (MVEKVFKLPFHGNLK) the chain is on the cytoplasmic side. Residues 58 to 78 (FLLVSYFIGTFLFASIICFTF) form a helical membrane-spanning segment. At 79 to 103 (GYHFFVPFFVTSNCDLIINATLFKY) the chain is on the extracellular side. An N-linked (GlcNAc...) asparagine glycan is attached at Asn-97. A helical transmembrane segment spans residues 104–124 (GHMIALIFMTIPMILPTAFTV). The Cytoplasmic segment spans residues 125-141 (ERFVALKMAHSYEHVRT). A helical transmembrane segment spans residues 142-162 (LLGPVLVLVVIAIDSMFLYDI). Residues 163 to 189 (YGQEKFDKPFINFILVPATSALQFNSF) lie on the Extracellular side of the membrane. A helical membrane pass occupies residues 190–210 (LWYMLYLKITNFICNLILLFI). The Cytoplasmic portion of the chain corresponds to 211 to 243 (HKILHQSSRYRRKNVSLSVKYEMQEISQSSRFT). A helical membrane pass occupies residues 244-264 (LIVTFTHLLFFGWYVSTILLI). Over 265-282 (RTVGPDFFRGFINYTVMR) the chain is Extracellular. Asn-277 is a glycosylation site (N-linked (GlcNAc...) asparagine). Residues 283–303 (GVYCATPTYNLVIVFIGFKAL) traverse the membrane as a helical segment. Topologically, residues 304-350 (NHLNFKRNNKVQSTIQIKSTGQEGAENYDNAISNYWDSVYTMNKSKL) are cytoplasmic.

The protein belongs to the nematode receptor-like protein srb family. Expressed throughout the head.

It is found in the cell membrane. The protein localises to the perikaryon. Its subcellular location is the cell projection. It localises to the dendrite. Functionally, G-protein coupled receptor. Plays a role in the navigational capacity of sperm and promotes the targeting of sperm derived from males to the fertilization site in the uterus of hermaphrodites. The chain is Serpentine receptor class beta-12 from Caenorhabditis elegans.